The primary structure comprises 115 residues: Migration and invasion enhancer 1 (115 aa).

At serine 2 the chain carries N-acetylserine. Residues cysteine 30 and cysteine 33 are joined by a disulfide bond. Cysteine 112 carries the S-geranylgeranyl cysteine lipid modification. A propeptide spans 113–115 (removed in mature form); the sequence is VIL.

This sequence belongs to the SelWTH family. As to quaternary structure, interacts with GPX1. Isoprenylation facilitates association with the plasma membrane and enhances the migratory phenotype of cells by inducing increased filopodia formation. In terms of tissue distribution, widely expressed with highest levels in kidney followed by brain and testis.

The protein localises to the cytoplasm. Its subcellular location is the cytosol. It is found in the cell membrane. Functionally, increases cell migration by inducing filopodia formation at the leading edge of migrating cells. Plays a role in regulation of apoptosis, possibly through control of CASP3. May be involved in a redox-related process. The polypeptide is Migration and invasion enhancer 1 (Mien1) (Mus musculus (Mouse)).